The primary structure comprises 390 residues: Flap endonuclease 1 (390 aa).

Positions 1-111 are N-domain; sequence MGIKGLAKLL…GELLKRREKR (111 aa). A Mg(2+)-binding site is contributed by Asp-34. DNA-binding residues include Arg-47 and Arg-77. The Mg(2+) site is built by Asp-93, Glu-165, Glu-167, Asp-186, and Asp-188. An I-domain region spans residues 129 to 260; that stretch reads EQDKQSKRLV…KTALKLIREH (132 aa). Position 165 (Glu-165) interacts with DNA. Residues Gly-238 and Asp-240 each coordinate DNA. Asp-240 is a Mg(2+) binding site. The tract at residues 342-390 is disordered; the sequence is KPQSRMDSFFKVKANPEGDKKKAEKRKAELAASRGKGKKGKGGGGFKKK. The interaction with PCNA stretch occupies residues 343 to 351; sequence PQSRMDSFF. Residues 349–370 are compositionally biased toward basic and acidic residues; it reads SFFKVKANPEGDKKKAEKRKAE. Positions 376-390 are enriched in basic residues; the sequence is GKGKKGKGGGGFKKK.

This sequence belongs to the XPG/RAD2 endonuclease family. FEN1 subfamily. In terms of assembly, interacts with PCNA. Three molecules of FEN1 bind to one PCNA trimer with each molecule binding to one PCNA monomer. PCNA stimulates the nuclease activity without altering cleavage specificity. Requires Mg(2+) as cofactor. In terms of processing, phosphorylated. Phosphorylation upon DNA damage induces relocalization to the nuclear plasma.

It is found in the nucleus. It localises to the nucleolus. Its subcellular location is the nucleoplasm. The protein resides in the mitochondrion. Functionally, structure-specific nuclease with 5'-flap endonuclease and 5'-3' exonuclease activities involved in DNA replication and repair. During DNA replication, cleaves the 5'-overhanging flap structure that is generated by displacement synthesis when DNA polymerase encounters the 5'-end of a downstream Okazaki fragment. It enters the flap from the 5'-end and then tracks to cleave the flap base, leaving a nick for ligation. Also involved in the long patch base excision repair (LP-BER) pathway, by cleaving within the apurinic/apyrimidinic (AP) site-terminated flap. Acts as a genome stabilization factor that prevents flaps from equilibrating into structures that lead to duplications and deletions. Also possesses 5'-3' exonuclease activity on nicked or gapped double-stranded DNA, and exhibits RNase H activity. Also involved in replication and repair of rDNA and in repairing mitochondrial DNA. The sequence is that of Flap endonuclease 1 from Thalassiosira pseudonana (Marine diatom).